The chain runs to 96 residues: Large ribosomal subunit protein bL28 (96 aa).

Residues Met1 to Asn22 show a composition bias toward polar residues. The tract at residues Met1–Lys24 is disordered.

The protein belongs to the bacterial ribosomal protein bL28 family.

The chain is Large ribosomal subunit protein bL28 from Sinorhizobium medicae (strain WSM419) (Ensifer medicae).